The primary structure comprises 354 residues: Chorismate synthase (354 aa).

NADP(+) contacts are provided by arginine 48 and arginine 54. FMN-binding positions include 125-127 (RSS), 238-239 (NA), glycine 278, 293-297 (KPTSS), and arginine 319.

It belongs to the chorismate synthase family. As to quaternary structure, homotetramer. The cofactor is FMNH2.

It catalyses the reaction 5-O-(1-carboxyvinyl)-3-phosphoshikimate = chorismate + phosphate. The protein operates within metabolic intermediate biosynthesis; chorismate biosynthesis; chorismate from D-erythrose 4-phosphate and phosphoenolpyruvate: step 7/7. Catalyzes the anti-1,4-elimination of the C-3 phosphate and the C-6 proR hydrogen from 5-enolpyruvylshikimate-3-phosphate (EPSP) to yield chorismate, which is the branch point compound that serves as the starting substrate for the three terminal pathways of aromatic amino acid biosynthesis. This reaction introduces a second double bond into the aromatic ring system. The chain is Chorismate synthase from Buchnera aphidicola subsp. Acyrthosiphon pisum (strain 5A).